Here is a 293-residue protein sequence, read N- to C-terminus: Elongation factor Ts (293 aa).

The involved in Mg(2+) ion dislocation from EF-Tu stretch occupies residues 80-83 (TDFV).

It belongs to the EF-Ts family.

It is found in the cytoplasm. Associates with the EF-Tu.GDP complex and induces the exchange of GDP to GTP. It remains bound to the aminoacyl-tRNA.EF-Tu.GTP complex up to the GTP hydrolysis stage on the ribosome. This chain is Elongation factor Ts, found in Enterococcus faecalis (strain ATCC 700802 / V583).